The primary structure comprises 304 residues: Acetylxylan esterase A (304 aa).

A signal peptide spans 1 to 24; the sequence is MLLSTHLLFVITTLVTSLLHPIDG. Ser148 functions as the Charge relay system in the catalytic mechanism. A glycan (N-linked (GlcNAc...) asparagine) is linked at Asn190.

The protein belongs to the carbohydrate esterase 1 (CE1) family. AxeA subfamily. Monomer.

The protein resides in the secreted. It catalyses the reaction Deacetylation of xylans and xylo-oligosaccharides.. The protein operates within glycan degradation; xylan degradation. Its activity is regulated as follows. Inactivated by di-isopropylfluorophosphate and phenylmethylsulfonylfluorid (PMSF), a specific inhibitor of serine esterases. In terms of biological role, acetylxylan esterase involved in the hydrolysis of xylan, a major structural heterogeneous polysaccharide found in plant biomass representing the second most abundant polysaccharide in the biosphere, after cellulose. Degrades acetylated xylans by cleaving acetyl side groups from the hetero-xylan backbone. The sequence is that of Acetylxylan esterase A (axeA) from Aspergillus awamori (Black koji mold).